A 305-amino-acid chain; its full sequence is Small ribosomal subunit protein bS1B (305 aa).

S1 motif domains follow at residues 29 to 98 (GQTV…LSRR), 116 to 180 (GKTL…LTQR), and 194 to 262 (GNIY…LSTR).

It belongs to the bacterial ribosomal protein bS1 family.

Binds mRNA. The polypeptide is Small ribosomal subunit protein bS1B (rps1b) (Synechocystis sp. (strain ATCC 27184 / PCC 6803 / Kazusa)).